The chain runs to 134 residues: Salivary protein 15 Iric-1 (134 aa).

Positions 1–21 (MESFVAMKVVCITVLFVIVAV) are cleaved as a signal peptide. Asn22 is a glycosylation site (N-linked (GlcNAc...) asparagine). The required for Borrelia OspC-binding stretch occupies residues 48–67 (PSYIRNPQKLALELLEICKN). N-linked (GlcNAc...) asparagine glycans are attached at residues Asn91 and Asn103. Residues 115–134 (GPNGETCAEKSKCVGHIPGC) are CD4-binding.

Belongs to the salp15 family. Monomer. Interacts with host CD4. Interacts with host DC-SIGN (CD209). In terms of assembly, (Microbial infection) Interacts with Borrelia outer surface protein C (OspC). Expressed in salivary glands. Detected in fed adult female.

It is found in the secreted. Its function is as follows. Salivary tick protein that downregulates host immune system by binding to both dendritic cells, and CD4(+) T cells. Specifically binds to the CD4 coreceptor on T cells. This interaction prevents the activation of the Src kinase, Lck, and its downstream substrate Zap-70, and results in deficient activation of PLCgamma1, the repression of calcium fluxes triggered by T-cell antigen receptor (TCR) ligation, and a subsequent reduction in interleukin-2 production. This salivary protein also binds to DC-SIGN (CD209) on dendritic cells (DC) and activates the Raf-1 kinase/MEK signaling pathway that results in down-regulating expression of pro-inflammatory cytokines. Furthermore, it inhibits T cell proliferation induced by DCs. In addition, it inhibits in vitro keratinocyte inflammation induced by Borrelia burgdorferi or by the major outer surface protein (OspC) of Borrelia. In addition, it downregulates chemokines and monocyte chemoattractant protein 1, as well as several antimicrobial peptides such as defensins, cathelicidin, psoriasin, and RNase 7. Apart from its immunomodulatory activities, it is also associated with protection of Borrelia spirochetes from antibody-mediated killing through its binding to OspC. In vivo, tests on different immune disease animal models show promising therapeutic results, e.g., in inhibiting HIV infection, experimental autoimmune encephalomyelitis, transplantation rejection, and asthma. (Microbial infection) Protects Borrelia garinii (strain VSBP) from host complement-mediated killing by binding to the surface of spirochetes and preventing deposition of host C5b-9 membrane attack complexes. Protects Borrelia garinii (strain A87S) from host complement-mediated killing. Functionally, (Microbial infection) Partially protects Borrelia burgdorferi (strains VS215 and B31) from host complement-mediated killing. This chain is Salivary protein 15 Iric-1, found in Ixodes ricinus (Common tick).